The sequence spans 1025 residues: DNA ligase 4 (1025 aa).

Residues Met1 to Val36 form a disordered region. Residues Glu289, Lys291, Leu292, Arg296, Glu349, Phe387, Glu447, Lys452, Lys469, and Lys471 each coordinate ATP. Lys291 acts as the N6-AMP-lysine intermediate in catalysis. Glu349 is a Mg(2+) binding site. Residue Glu447 participates in Mg(2+) binding. The BRCT 1 domain maps to Val667–Phe763. Residues Ala773–Lys904 form a disordered region. 2 stretches are compositionally biased toward acidic residues: residues Glu775–Gly785 and Ser806–Ala816. The span at Pro817 to Ser838 shows a compositional bias: basic and acidic residues. Positions Asp845 to Asp870 are enriched in acidic residues. The span at Arg891–Lys904 shows a compositional bias: basic and acidic residues. Residues Asp915–Phe1025 form the BRCT 2 domain.

The protein belongs to the ATP-dependent DNA ligase family. It depends on Mg(2+) as a cofactor.

It localises to the nucleus. It carries out the reaction ATP + (deoxyribonucleotide)n-3'-hydroxyl + 5'-phospho-(deoxyribonucleotide)m = (deoxyribonucleotide)n+m + AMP + diphosphate.. DNA ligase involved in DNA non-homologous end joining (NHEJ); required for double-strand break (DSB) repair. The protein is DNA ligase 4 (LIG4) of Coprinopsis cinerea (strain Okayama-7 / 130 / ATCC MYA-4618 / FGSC 9003) (Inky cap fungus).